The following is a 319-amino-acid chain: ATP-dependent 6-phosphofructokinase (319 aa).

Residues G10, 71–72 (RS), and 101–104 (GDGS) contribute to the ATP site. D102 is a binding site for Mg(2+). 125-127 (TID) lines the substrate pocket. Residue D127 is the Proton acceptor of the active site. R154 contacts ADP. Substrate contacts are provided by residues R162 and 169-171 (MGR). 185–187 (GAE) contributes to the ADP binding site. Residues E223, R244, and 250-253 (HVQR) each bind substrate.

Belongs to the phosphofructokinase type A (PFKA) family. ATP-dependent PFK group I subfamily. Prokaryotic clade 'B1' sub-subfamily. As to quaternary structure, homotetramer. It depends on Mg(2+) as a cofactor.

It localises to the cytoplasm. The catalysed reaction is beta-D-fructose 6-phosphate + ATP = beta-D-fructose 1,6-bisphosphate + ADP + H(+). The protein operates within carbohydrate degradation; glycolysis; D-glyceraldehyde 3-phosphate and glycerone phosphate from D-glucose: step 3/4. With respect to regulation, allosterically activated by ADP and other diphosphonucleosides, and allosterically inhibited by phosphoenolpyruvate. Functionally, catalyzes the phosphorylation of D-fructose 6-phosphate to fructose 1,6-bisphosphate by ATP, the first committing step of glycolysis. In Wolinella succinogenes (strain ATCC 29543 / DSM 1740 / CCUG 13145 / JCM 31913 / LMG 7466 / NCTC 11488 / FDC 602W) (Vibrio succinogenes), this protein is ATP-dependent 6-phosphofructokinase.